Reading from the N-terminus, the 433-residue chain is Histidinol dehydrogenase (433 aa).

The substrate site is built by Ser236, Gln258, and His261. Gln258 and His261 together coordinate Zn(2+). Residues Glu325 and His326 each act as proton acceptor in the active site. 4 residues coordinate substrate: His326, Asp359, Glu413, and His418. Residue Asp359 coordinates Zn(2+). Residue His418 coordinates Zn(2+).

This sequence belongs to the histidinol dehydrogenase family. Requires Zn(2+) as cofactor.

The catalysed reaction is L-histidinol + 2 NAD(+) + H2O = L-histidine + 2 NADH + 3 H(+). The protein operates within amino-acid biosynthesis; L-histidine biosynthesis; L-histidine from 5-phospho-alpha-D-ribose 1-diphosphate: step 9/9. Its function is as follows. Catalyzes the sequential NAD-dependent oxidations of L-histidinol to L-histidinaldehyde and then to L-histidine. In Pseudoalteromonas translucida (strain TAC 125), this protein is Histidinol dehydrogenase.